We begin with the raw amino-acid sequence, 525 residues long: Patatin-like protein 8 (525 aa).

The interval 1 to 50 is disordered; sequence MNRRYEKPPPLSVSSKGKKKHFVNHTAPNTPGNYERTQTSPTLSTARSHE. The segment covering 26–46 has biased composition (polar residues); sequence TAPNTPGNYERTQTSPTLSTA. A PNPLA domain is found at 124–338; the sequence is LSIDGGGMRG…AMSNPTAAAI (215 aa). A GXGXXG motif is present at residues 128–133; the sequence is GGGMRG. The active-site Nucleophile is serine 168.

It belongs to the patatin family. Specifically expressed in roots.

In terms of biological role, possesses non-specific lipolytic acyl hydrolase (LAH) activity. Hydrolyzes phospholipids as well as galactolipids. May play a role in disease resistance. The sequence is that of Patatin-like protein 8 (PLP8) from Arabidopsis thaliana (Mouse-ear cress).